Reading from the N-terminus, the 402-residue chain is Palmitoyltransferase PFA4 (402 aa).

The Cytoplasmic portion of the chain corresponds to 1–8 (MAVQLKWP). The helical transmembrane segment at 9–29 (IIGVVIPCVLIAMVAYGSHYF) threads the bilayer. The Lumenal segment spans residues 30–39 (VFRTNLSRTE). The helical transmembrane segment at 40–60 (QILYEVYVCIVWLSYYLAIVV) threads the bilayer. Residues 61–125 (DPGSPPKNFT…GHNNLPHFLR (65 aa)) lie on the Cytoplasmic side of the membrane. Residues 78 to 128 (RWCKKCQNYKPERSHHCKTCNKCVLKMDHHCPWTYNCVGHNNLPHFLRFVF) enclose the DHHC domain. The active-site S-palmitoyl cysteine intermediate is the C108. Residues 126 to 146 (FVFFLIVGMTYVLFQLGKQVL) traverse the membrane as a helical segment. Over 147–165 (HYYDSSKLPSYLIDKKEMC) the chain is Lumenal. A helical transmembrane segment spans residues 166 to 186 (AVIFLLPVTFFVFVSIIILFV). Over 187–402 (RCMINLLFRG…LVSKDEISNN (216 aa)) the chain is Cytoplasmic.

The protein belongs to the DHHC palmitoyltransferase family. PFA4 subfamily.

Its subcellular location is the endoplasmic reticulum membrane. The catalysed reaction is L-cysteinyl-[protein] + hexadecanoyl-CoA = S-hexadecanoyl-L-cysteinyl-[protein] + CoA. In terms of biological role, mediates the reversible addition of palmitate to target proteins, thereby regulating their membrane association and biological function. This chain is Palmitoyltransferase PFA4, found in Debaryomyces hansenii (strain ATCC 36239 / CBS 767 / BCRC 21394 / JCM 1990 / NBRC 0083 / IGC 2968) (Yeast).